The following is a 159-amino-acid chain: Cyclic pyranopterin monophosphate synthase (159 aa).

Residues 75–77 and 113–114 contribute to the substrate site; these read LCH and ME. Residue Asp128 is part of the active site.

It belongs to the MoaC family. As to quaternary structure, homohexamer; trimer of dimers.

It catalyses the reaction (8S)-3',8-cyclo-7,8-dihydroguanosine 5'-triphosphate = cyclic pyranopterin phosphate + diphosphate. The protein operates within cofactor biosynthesis; molybdopterin biosynthesis. Functionally, catalyzes the conversion of (8S)-3',8-cyclo-7,8-dihydroguanosine 5'-triphosphate to cyclic pyranopterin monophosphate (cPMP). The chain is Cyclic pyranopterin monophosphate synthase from Cereibacter sphaeroides (strain ATCC 17023 / DSM 158 / JCM 6121 / CCUG 31486 / LMG 2827 / NBRC 12203 / NCIMB 8253 / ATH 2.4.1.) (Rhodobacter sphaeroides).